Here is a 339-residue protein sequence, read N- to C-terminus: Holliday junction branch migration complex subunit RuvB (339 aa).

Residues Met-1–Tyr-180 form a large ATPase domain (RuvB-L) region. ATP-binding positions include Leu-19, Arg-20, Gly-61, Lys-64, Thr-65, Thr-66, Glu-127–Phe-129, Arg-170, Tyr-180, and Arg-217. Thr-65 serves as a coordination point for Mg(2+). Residues Thr-181–Glu-251 are small ATPAse domain (RuvB-S). The tract at residues His-254–Asp-339 is head domain (RuvB-H). The DNA site is built by Arg-309 and Arg-314.

Belongs to the RuvB family. Homohexamer. Forms an RuvA(8)-RuvB(12)-Holliday junction (HJ) complex. HJ DNA is sandwiched between 2 RuvA tetramers; dsDNA enters through RuvA and exits via RuvB. An RuvB hexamer assembles on each DNA strand where it exits the tetramer. Each RuvB hexamer is contacted by two RuvA subunits (via domain III) on 2 adjacent RuvB subunits; this complex drives branch migration. In the full resolvosome a probable DNA-RuvA(4)-RuvB(12)-RuvC(2) complex forms which resolves the HJ.

The protein localises to the cytoplasm. The enzyme catalyses ATP + H2O = ADP + phosphate + H(+). In terms of biological role, the RuvA-RuvB-RuvC complex processes Holliday junction (HJ) DNA during genetic recombination and DNA repair, while the RuvA-RuvB complex plays an important role in the rescue of blocked DNA replication forks via replication fork reversal (RFR). RuvA specifically binds to HJ cruciform DNA, conferring on it an open structure. The RuvB hexamer acts as an ATP-dependent pump, pulling dsDNA into and through the RuvAB complex. RuvB forms 2 homohexamers on either side of HJ DNA bound by 1 or 2 RuvA tetramers; 4 subunits per hexamer contact DNA at a time. Coordinated motions by a converter formed by DNA-disengaged RuvB subunits stimulates ATP hydrolysis and nucleotide exchange. Immobilization of the converter enables RuvB to convert the ATP-contained energy into a lever motion, pulling 2 nucleotides of DNA out of the RuvA tetramer per ATP hydrolyzed, thus driving DNA branch migration. The RuvB motors rotate together with the DNA substrate, which together with the progressing nucleotide cycle form the mechanistic basis for DNA recombination by continuous HJ branch migration. Branch migration allows RuvC to scan DNA until it finds its consensus sequence, where it cleaves and resolves cruciform DNA. This Geotalea daltonii (strain DSM 22248 / JCM 15807 / FRC-32) (Geobacter daltonii) protein is Holliday junction branch migration complex subunit RuvB.